We begin with the raw amino-acid sequence, 27 residues long: uncharacterized protein (27 aa).

It is found in the plastid. The protein localises to the cyanelle. This is an uncharacterized protein from Cyanophora paradoxa.